Here is a 358-residue protein sequence, read N- to C-terminus: Homoserine O-acetyltransferase (358 aa).

Positions 41 to 343 (NAVLICHALT…DYGHDAFLVD (303 aa)) constitute an AB hydrolase-1 domain. The Nucleophile role is filled by Ser143. Substrate is bound at residue Arg212. Active-site residues include Asp304 and His337. Residue Asp338 participates in substrate binding.

As to quaternary structure, homodimer.

Its subcellular location is the cytoplasm. It catalyses the reaction L-homoserine + acetyl-CoA = O-acetyl-L-homoserine + CoA. It functions in the pathway amino-acid biosynthesis; L-methionine biosynthesis via de novo pathway; O-acetyl-L-homoserine from L-homoserine: step 1/1. Functionally, transfers an acetyl group from acetyl-CoA to L-homoserine, forming acetyl-L-homoserine. Utilizes a ping-pong kinetic mechanism in which the acetyl group of acetyl-CoA is initially transferred to the enzyme to form an acetyl-enzyme intermediate before subsequent transfer to homoserine to form the final product, O-acetylhomoserine. The polypeptide is Homoserine O-acetyltransferase (Haemophilus influenzae (strain ATCC 51907 / DSM 11121 / KW20 / Rd)).